The primary structure comprises 188 residues: Threonylcarbamoyl-AMP synthase (188 aa).

The YrdC-like domain maps to 3–188; that stretch reads QLHPSDIKDI…RSGKILRNGQ (186 aa).

This sequence belongs to the SUA5 family. TsaC subfamily.

It is found in the cytoplasm. It carries out the reaction L-threonine + hydrogencarbonate + ATP = L-threonylcarbamoyladenylate + diphosphate + H2O. Required for the formation of a threonylcarbamoyl group on adenosine at position 37 (t(6)A37) in tRNAs that read codons beginning with adenine. Catalyzes the conversion of L-threonine, HCO(3)(-)/CO(2) and ATP to give threonylcarbamoyl-AMP (TC-AMP) as the acyladenylate intermediate, with the release of diphosphate. The chain is Threonylcarbamoyl-AMP synthase from Shewanella baltica (strain OS195).